The sequence spans 430 residues: Phosphomethylpyrimidine synthase (430 aa).

Residues Asn67, Met96, Tyr125, His161, 183-185 (SRG), 224-227 (DALR), and Glu263 each bind substrate. Zn(2+) is bound at residue His267. Residue Tyr290 coordinates substrate. Zn(2+) is bound at residue His331. Positions 406, 409, and 413 each coordinate [4Fe-4S] cluster.

This sequence belongs to the ThiC family. Homodimer. [4Fe-4S] cluster serves as cofactor.

It catalyses the reaction 5-amino-1-(5-phospho-beta-D-ribosyl)imidazole + S-adenosyl-L-methionine = 4-amino-2-methyl-5-(phosphooxymethyl)pyrimidine + CO + 5'-deoxyadenosine + formate + L-methionine + 3 H(+). It functions in the pathway cofactor biosynthesis; thiamine diphosphate biosynthesis. Functionally, catalyzes the synthesis of the hydroxymethylpyrimidine phosphate (HMP-P) moiety of thiamine from aminoimidazole ribotide (AIR) in a radical S-adenosyl-L-methionine (SAM)-dependent reaction. This is Phosphomethylpyrimidine synthase from Campylobacter jejuni subsp. jejuni serotype O:6 (strain 81116 / NCTC 11828).